The primary structure comprises 178 residues: Hypoxanthine phosphoribosyltransferase (178 aa).

Diphosphate is bound by residues Arg43 and Gly44. Residue Glu99 coordinates GMP. Glu99 contacts IMP. Mg(2+) contacts are provided by Glu99 and Asp100. The Proton acceptor role is filled by Asp103. GMP is bound by residues 103–108 (DSGNTL), Lys131, and Asp159. Residues 103–108 (DSGNTL) and Lys131 contribute to the IMP site. Arg165 contributes to the diphosphate binding site.

This sequence belongs to the purine/pyrimidine phosphoribosyltransferase family. In terms of assembly, homotetramer. The cofactor is Mg(2+).

It is found in the cytoplasm. The enzyme catalyses IMP + diphosphate = hypoxanthine + 5-phospho-alpha-D-ribose 1-diphosphate. It carries out the reaction GMP + diphosphate = guanine + 5-phospho-alpha-D-ribose 1-diphosphate. It participates in purine metabolism; IMP biosynthesis via salvage pathway; IMP from hypoxanthine: step 1/1. Functionally, purine salvage pathway enzyme which catalyzes the transfer of the ribosyl-5-phosphate group from 5-phospho-alpha-D-ribose 1-diphosphate (PRPP) to the N9 position of hypoxanthine to yield IMP (inosine 5'-monophosphate). To a lesser extent, can also act on guanine leading to GMP, but shows a highly less efficient activity with xanthine. This is Hypoxanthine phosphoribosyltransferase (hpt) from Salmonella typhimurium (strain LT2 / SGSC1412 / ATCC 700720).